Here is a 235-residue protein sequence, read N- to C-terminus: N,O-diacetylmuramidase (235 aa).

Positions 1–17 (MKLSLLTVAAAAGAAVA) are cleaved as a signal peptide. Residues 29–235 (SVQGFDISGY…DQLQRFAKGG (207 aa)) enclose the Ch-type lysozyme domain. Residues aspartate 34, aspartate 122, and glutamate 124 contribute to the active site. Cysteine 132 and cysteine 171 are disulfide-bonded.

It belongs to the glycosyl hydrolase 25 family.

The protein localises to the secreted. It catalyses the reaction Hydrolysis of (1-&gt;4)-beta-linkages between N-acetylmuramic acid and N-acetyl-D-glucosamine residues in a peptidoglycan and between N-acetyl-D-glucosamine residues in chitodextrins.. In terms of biological role, this enzyme has both lysozyme (acetylmuramidase) and diacetylmuramidase activities. The protein is N,O-diacetylmuramidase of Arthroderma benhamiae (strain ATCC MYA-4681 / CBS 112371) (Trichophyton mentagrophytes).